The sequence spans 219 residues: FMN-dependent NADH:quinone oxidoreductase 2 (219 aa).

Residues serine 10 and 23-25 (SIS) each bind FMN.

This sequence belongs to the azoreductase type 1 family. Homodimer. FMN is required as a cofactor.

The catalysed reaction is 2 a quinone + NADH + H(+) = 2 a 1,4-benzosemiquinone + NAD(+). The enzyme catalyses N,N-dimethyl-1,4-phenylenediamine + anthranilate + 2 NAD(+) = 2-(4-dimethylaminophenyl)diazenylbenzoate + 2 NADH + 2 H(+). In terms of biological role, quinone reductase that provides resistance to thiol-specific stress caused by electrophilic quinones. Its function is as follows. Also exhibits azoreductase activity. Catalyzes the reductive cleavage of the azo bond in aromatic azo compounds to the corresponding amines. In Colwellia psychrerythraea (strain 34H / ATCC BAA-681) (Vibrio psychroerythus), this protein is FMN-dependent NADH:quinone oxidoreductase 2.